Here is a 73-residue protein sequence, read N- to C-terminus: Large ribosomal subunit protein bL31 (73 aa).

Belongs to the bacterial ribosomal protein bL31 family. Type A subfamily. In terms of assembly, part of the 50S ribosomal subunit.

Binds the 23S rRNA. In Allorhizobium ampelinum (strain ATCC BAA-846 / DSM 112012 / S4) (Agrobacterium vitis (strain S4)), this protein is Large ribosomal subunit protein bL31.